The following is a 688-amino-acid chain: Zinc finger and BTB domain-containing protein 48 (688 aa).

Residues cysteine 26–serine 89 enclose the BTB domain. The interval serine 119–serine 140 is disordered. A Glycyl lysine isopeptide (Lys-Gly) (interchain with G-Cter in SUMO2) cross-link involves residue lysine 143. The interval proline 161–lysine 192 is disordered. A phosphoserine mark is found at serine 169, serine 171, and serine 179. Polar residues predominate over residues histidine 170–proline 186. A Glycyl lysine isopeptide (Lys-Gly) (interchain with G-Cter in SUMO2) cross-link involves residue lysine 263. The segment at valine 291–histidine 313 adopts a C2H2-type 1 zinc-finger fold. Zn(2+)-binding residues include cysteine 293, cysteine 296, histidine 309, histidine 313, cysteine 321, cysteine 324, histidine 337, cysteine 342, cysteine 352, cysteine 355, histidine 368, histidine 372, cysteine 380, cysteine 383, histidine 396, and histidine 401. The CCHC-type zinc finger occupies phenylalanine 319–asparagine 344. C2H2-type zinc fingers lie at residues phenylalanine 350–histidine 372, tyrosine 378–histidine 401, histidine 407–histidine 430, phenylalanine 436–histidine 459, histidine 465–histidine 487, phenylalanine 493–histidine 515, phenylalanine 521–histidine 544, histidine 550–histidine 572, and phenylalanine 578–histidine 600. Zn(2+)-binding residues include cysteine 552, cysteine 555, histidine 568, cysteine 580, cysteine 583, histidine 596, and histidine 600.

Belongs to the krueppel C2H2-type zinc-finger protein family. In terms of assembly, interacts with EP300. As to expression, detected in adrenal gland and neuroblastoma.

It is found in the nucleus. The protein resides in the chromosome. The protein localises to the telomere. Functionally, plays a critical role in transcriptional regulation and chromatin remodeling. Acts as a regulator of telomere length. Directly binds the telomeric double-stranded 5'-TTAGGG-3' repeat. Preferentially binds to telomeres that have a low concentration of shelterin complex and acts as a regulator of telomere length by initiating telomere trimming, a process that prevents the accumulation of aberrantly long telomeres. Also acts as a transcription regulator that binds to promoter regions. Regulates expression of a small subset of genes, including MTFP1. Acts as a negative regulator of cell proliferation by specifically activating expression of ARF, a tumor suppressor isoform of CDKN2A. Acts as a transcription regulator of CIITA, the major factor regulating MHC class II gene expression. In addition, regulates cellular m6A/m6Am methylation on RNA by facilitating the recruitment of the RNA demethylase, FTO, to target mRNAs. This Homo sapiens (Human) protein is Zinc finger and BTB domain-containing protein 48.